A 405-amino-acid polypeptide reads, in one-letter code: Aspartic protease (405 aa).

The signal sequence occupies residues 1 to 21 (MISDTVIAILAVALVGSTVQA). The propeptide at 22–81 (APVDATATSTSGIIAVPISKSAAQLAREADPVVSLDWLKKTKAQAQYKHKQANARLHSKR) is removed in mature form. A Peptidase A1 domain is found at 97–402 (WTGPITIGGQ…DVGNARVGFA (306 aa)). D113 is an active-site residue. C126 and C131 form a disulfide bridge. D290 is a catalytic residue. Residues C332 and C366 are joined by a disulfide bond.

This sequence belongs to the peptidase A1 family.

Its subcellular location is the secreted. Its activity is regulated as follows. Inhibited by pepstatin A. In terms of biological role, possesses acidic protease activity. Hydrolyzes casein and azoalbumin in vitro. The protein is Aspartic protease of Phaffia rhodozyma (Yeast).